A 327-amino-acid polypeptide reads, in one-letter code: GTPase Obg (327 aa).

The 159-residue stretch at methionine 1–leucine 159 folds into the Obg domain. In terms of domain architecture, OBG-type G spans alanine 160 to isoleucine 327. ATP-binding positions include glycine 166–serine 173, phenylalanine 191–isoleucine 195, aspartate 213–glycine 216, asparagine 280–glutamate 283, and serine 309–serine 311. The Mg(2+) site is built by serine 173 and threonine 193.

It belongs to the TRAFAC class OBG-HflX-like GTPase superfamily. OBG GTPase family. In terms of assembly, monomer. Requires Mg(2+) as cofactor.

Its subcellular location is the cytoplasm. Its function is as follows. An essential GTPase which binds GTP, GDP and possibly (p)ppGpp with moderate affinity, with high nucleotide exchange rates and a fairly low GTP hydrolysis rate. Plays a role in control of the cell cycle, stress response, ribosome biogenesis and in those bacteria that undergo differentiation, in morphogenesis control. The sequence is that of GTPase Obg from Prochlorococcus marinus (strain MIT 9312).